Here is an 81-residue protein sequence, read N- to C-terminus: Pyruvate synthase subunit PorD (81 aa).

The segment at Met1–Gly20 is disordered. 2 4Fe-4S ferredoxin-type domains span residues Phe25–Glu54 and Lys51–Glu80. [4Fe-4S] cluster-binding residues include Cys34, Cys37, Cys40, Cys44, Cys60, Cys63, Cys66, and Cys70.

As to quaternary structure, heterotetramer of one alpha, one beta, one delta and one gamma chain. Requires [4Fe-4S] cluster as cofactor.

This Methanothermobacter marburgensis (strain ATCC BAA-927 / DSM 2133 / JCM 14651 / NBRC 100331 / OCM 82 / Marburg) (Methanobacterium thermoautotrophicum) protein is Pyruvate synthase subunit PorD (porD).